Reading from the N-terminus, the 112-residue chain is Putative acyl carrier protein, mitochondrial (112 aa).

A mitochondrion-targeting transit peptide spans 1 to 28 (MLSRFSSQLRFISAVRPVIPKFQPLRFY). Positions 33–109 (PDAEKRILKV…DAISYITKNP (77 aa)) constitute a Carrier domain. Position 69 is an O-(pantetheine 4'-phosphoryl)serine (Ser-69).

It belongs to the acyl carrier protein (ACP) family. In terms of processing, 4'-phosphopantetheine is transferred from CoA to a specific serine of apo-ACP by acpS. This modification is essential for activity because fatty acids are bound in thioester linkage to the sulfhydryl of the prosthetic group.

Its subcellular location is the mitochondrion. The protein operates within lipid metabolism; fatty acid biosynthesis. Functionally, carrier of the growing fatty acid chain in fatty acid biosynthesis. May be involved in the synthesis of very-long-chain fatty acids. This is Putative acyl carrier protein, mitochondrial from Schizosaccharomyces pombe (strain 972 / ATCC 24843) (Fission yeast).